Reading from the N-terminus, the 361-residue chain is Pseudouridine-5'-phosphate glycosidase (361 aa).

The active-site Proton donor is glutamate 27. 2 residues coordinate substrate: lysine 88 and valine 108. Position 140 (aspartate 140) interacts with Mn(2+). 142–144 (SAD) contributes to the substrate binding site. The active-site Nucleophile is lysine 161. The disordered stretch occupies residues 306-361 (DRSPTDPAAPDPTAPDPAAPDPTAPDPAAPDSAAPDLAGPDPSAPDPAAVARAHRP). The span at 312–333 (PAAPDPTAPDPAAPDPTAPDPA) shows a compositional bias: pro residues. The segment covering 334–354 (APDSAAPDLAGPDPSAPDPAA) has biased composition (low complexity).

Belongs to the pseudouridine-5'-phosphate glycosidase family. Homotrimer. Mn(2+) serves as cofactor.

The catalysed reaction is D-ribose 5-phosphate + uracil = psi-UMP + H2O. In terms of biological role, catalyzes the reversible cleavage of pseudouridine 5'-phosphate (PsiMP) to ribose 5-phosphate and uracil. Functions biologically in the cleavage direction, as part of a pseudouridine degradation pathway. This is Pseudouridine-5'-phosphate glycosidase from Frankia alni (strain DSM 45986 / CECT 9034 / ACN14a).